The sequence spans 955 residues: Glycine dehydrogenase (decarboxylating) (955 aa).

An N6-(pyridoxal phosphate)lysine modification is found at lysine 702.

It belongs to the GcvP family. In terms of assembly, the glycine cleavage system is composed of four proteins: P, T, L and H. Requires pyridoxal 5'-phosphate as cofactor.

The catalysed reaction is N(6)-[(R)-lipoyl]-L-lysyl-[glycine-cleavage complex H protein] + glycine + H(+) = N(6)-[(R)-S(8)-aminomethyldihydrolipoyl]-L-lysyl-[glycine-cleavage complex H protein] + CO2. In terms of biological role, the glycine cleavage system catalyzes the degradation of glycine. The P protein binds the alpha-amino group of glycine through its pyridoxal phosphate cofactor; CO(2) is released and the remaining methylamine moiety is then transferred to the lipoamide cofactor of the H protein. This is Glycine dehydrogenase (decarboxylating) from Bradyrhizobium diazoefficiens (strain JCM 10833 / BCRC 13528 / IAM 13628 / NBRC 14792 / USDA 110).